A 348-amino-acid chain; its full sequence is Eukaryotic translation initiation factor 3 subunit F (348 aa).

Residues 30-166 (VVIQPQAIFS…TRTYISAPVG (137 aa)) form the MPN domain. Gly residues predominate over residues 312–327 (STAIGGTGAESGGQRG). The segment at 312-348 (STAIGGTGAESGGQRGGQRNNRQRGGQQRNQAEELRA) is disordered. Over residues 328–341 (GQRNNRQRGGQQRN) the composition is skewed to low complexity.

The protein belongs to the eIF-3 subunit F family. Component of the eukaryotic translation initiation factor 3 (eIF-3) complex.

Its subcellular location is the cytoplasm. Component of the eukaryotic translation initiation factor 3 (eIF-3) complex, which is involved in protein synthesis of a specialized repertoire of mRNAs and, together with other initiation factors, stimulates binding of mRNA and methionyl-tRNAi to the 40S ribosome. The eIF-3 complex specifically targets and initiates translation of a subset of mRNAs involved in cell proliferation. The chain is Eukaryotic translation initiation factor 3 subunit F from Coccidioides immitis (strain RS) (Valley fever fungus).